Consider the following 366-residue polypeptide: Inhibin alpha chain (366 aa).

Positions 1 to 18 (MVLHLLLFLLLTPQGGHS) are cleaved as a signal peptide. A propeptide spanning residues 19 to 61 (CQGLELARELVLAKVRALFLDALGPPAVTREGGDPGVRRLPRR) is cleaved from the precursor. Residues 62–232 (HALGGFTHRG…PPSGGERARR (171 aa)) constitute a propeptide, inhibin alpha N-terminal region. N-linked (GlcNAc...) asparagine glycans are attached at residues Asn-146 and Asn-268. 3 cysteine pairs are disulfide-bonded: Cys-262–Cys-328, Cys-291–Cys-363, and Cys-295–Cys-365. Asn-302 carries an N-linked (GlcNAc...) asparagine; partial glycan.

The protein belongs to the TGF-beta family. Dimeric, linked by one or more disulfide bonds. Activin B is a dimer of alpha and beta-B. Inhibin A is a dimer of alpha and beta-A. Inhibin B is a dimer of alpha and beta-B. Interacts with TGFBR3L; this interaction regulates female fertility. Post-translationally, proteolytic processing yields a number of bioactive forms. The 20/23 kDa forms consist solely of the mature alpha chain, the 26/29 kDa forms consist of the most N-terminal propeptide linked through a disulfide bond to the mature alpha chain, the 50/53 kDa forms encompass the entire proprotein. Each type can be furthermore either mono- or diglycosylated, causing the mass difference. As to expression, originally found in ovary (granulosa cells) and testis (Sertoli cells), but widely distributed in many tissues including brain and placenta. In adrenal cortex expression is limited to the zona reticularis and the innermost zona fasciculata in the normal gland, extending centripetally into the zona fasciculata in hyperplasia. Also found in adrenocortical tumors. Also expressed in prostate epithelium of benign prostatic hyperplasia, in regions of basal cell hyperplasia and in nonmalignant regions of high grade prostate cancer. Only circulating inhibin B is found in male, whereas circulating inhibins A and B are found in female.

It localises to the secreted. Functionally, inhibins and activins inhibit and activate, respectively, the secretion of follitropin by the pituitary gland. Inhibins/activins are involved in regulating a number of diverse functions such as hypothalamic and pituitary hormone secretion, gonadal hormone secretion, germ cell development and maturation, erythroid differentiation, insulin secretion, nerve cell survival, embryonic axial development or bone growth, depending on their subunit composition. Inhibins appear to oppose the functions of activins. Its function is as follows. Inhibin A is a dimer of alpha/INHA and beta-A/INHBA that functions as a feedback regulator in the hypothalamic-pituitary-gonadal (HPG) axis. Inhibits the secretion of FSH from the anterior pituitary gland by acting on pituitary gonadotrope cells. Antagonizes activin A by binding to the proteoglycan, betaglycan, and forming a stable complex with and, thereby, sequestering type II activin receptors while excluding type I receptor. In terms of biological role, inhibin B is a dimer of alpha and beta-B that plays a crucial role in the regulation of the reproductive system by inhibiting the secretion of follicle-stimulating hormone (FSH) from the anterior pituitary gland. Thereby, maintains reproductive homeostasis in both males and females. Acts as a more potent suppressor of FSH release than inhibin A. Functions as competitive receptor antagonist binding activin type II receptors with high affinity in the presence of the TGF-beta type III coreceptor/TGFBR3L. The sequence is that of Inhibin alpha chain (INHA) from Homo sapiens (Human).